The following is a 79-amino-acid chain: Centromere protein X (79 aa).

Met-1 is subject to N-acetylmethionine.

Belongs to the CENP-X/MHF2 family. Heterodimer with CENPX, sometimes called MHF; this interaction stabilizes both partners. MHF heterodimers can assemble to form tetrameric structures. MHF also coassemble with CENPT-CENPW heterodimers at centromeres to form the tetrameric CENP-T-W-S-X complex. Forms a discrete complex with FANCM and CENPX, called FANCM-MHF; this interaction, probably mediated by direct binding between CENPS and FANCM, leads to synergistic activation of double-stranded DNA binding and strongly stimulates FANCM-mediated DNA remodeling. Recruited by FANCM to the Fanconi anemia (FA) core complex, which consists of CENPS, CENPX, FANCA, FANCB, FANCC, FANCE, FANCF, FANCG, FANCL, FANCM, FAAP24 and FAAP100. The FA core complex associates with Bloom syndrome (BLM) complex, which consists of at least BLM, DNA topoisomerase 3-alpha (TOP3A), RMI1/BLAP75, RPA1/RPA70 and RPA2/RPA32. The super complex between FA and BLM is called BRAFT.

The protein resides in the nucleus. Its subcellular location is the chromosome. It localises to the centromere. The protein localises to the kinetochore. Functionally, DNA-binding component of the Fanconi anemia (FA) core complex. Required for the normal activation of the FA pathway, leading to monoubiquitination of the FANCI-FANCD2 complex in response to DNA damage, cellular resistance to DNA cross-linking drugs, and prevention of chromosomal breakage. In complex with CENPS (MHF heterodimer), crucial cofactor for FANCM in both binding and ATP-dependent remodeling of DNA. Stabilizes FANCM. In complex with CENPS and FANCM (but not other FANC proteins), rapidly recruited to blocked forks and promotes gene conversion at blocked replication forks. In complex with CENPS, CENPT and CENPW (CENP-T-W-S-X heterotetramer), involved in the formation of a functional kinetochore outer plate, which is essential for kinetochore-microtubule attachment and faithful mitotic progression. As a component of MHF and CENP-T-W-S-X complexes, binds DNA and bends it to form a nucleosome-like structure. DNA-binding function is fulfilled in the presence of CENPS, with the following preference for DNA substates: Holliday junction &gt; double-stranded &gt; splay arm &gt; single-stranded. Does not bind DNA on its own. The chain is Centromere protein X (CENPX) from Bos taurus (Bovine).